A 244-amino-acid polypeptide reads, in one-letter code: uncharacterized protein (244 aa).

Positions 1-19 (MRGIFFLILILNFIGLIFS) are cleaved as a signal peptide. N-linked (GlcNAc...) asparagine glycans are attached at residues N45 and N77. 2 consecutive ShKT domains span residues 67 to 105 (CNNPQPDTTLNCTALAGECNSALFSELMKEKCPATCGKC) and 113 to 149 (CSDKSKPDICVNLKTLCNSVEFYDKLSEQCPSTCNRC). Cystine bridges form between C113–C149, C122–C142, and C129–C146. Residues N152 and N158 are each glycosylated (N-linked (GlcNAc...) asparagine). 2 ShKT domains span residues 171–205 (CTDLANDCSYNQNRCSVKEYSSLMHRLCPKTCNAC) and 208–243 (CEDANKMCPIWVPRGFCSKFDHDKVQKSCAKSCNIC). Disulfide bonds link C171–C205, C178–C198, C185–C202, C208–C243, C215–C236, and C224–C240.

This is an uncharacterized protein from Caenorhabditis elegans.